A 317-amino-acid polypeptide reads, in one-letter code: MTESGSTASPLCGVGSSVMTETQETYQATTRVKRGLADMLKGGVIMDVVTPEQARIAEDAGASAVMALERVPADIRSQGGVARMSDPDLIEGIVNAVSIPVMAKARIGHFVEAQVLEALGVDFIDESEVLSPADYTHHINKWKFDVPFVCGATNLGEALRRITEGAAMIRSKGEAGTGDVSEAVRHLRTIRGDINRLRSLDEDELFVAAKEFQAPYDLVREVASTGKLPVVTFVAGGVATPADAALVRQMGAEGVFVGSGIFKSGNPAARAAAIVKAATLFDDPSVIADVSRGLGEAMVGINVSDVPAPHRLAERGW.

Residue D47 coordinates D-ribose 5-phosphate. The active-site Schiff-base intermediate with D-ribose 5-phosphate is K104. G176 contacts D-ribose 5-phosphate. R188 lines the D-glyceraldehyde 3-phosphate pocket. Residues G237 and 258 to 259 (GS) contribute to the D-ribose 5-phosphate site.

The protein belongs to the PdxS/SNZ family. In terms of assembly, in the presence of PdxT, forms a dodecamer of heterodimers.

It catalyses the reaction aldehydo-D-ribose 5-phosphate + D-glyceraldehyde 3-phosphate + L-glutamine = pyridoxal 5'-phosphate + L-glutamate + phosphate + 3 H2O + H(+). Its pathway is cofactor biosynthesis; pyridoxal 5'-phosphate biosynthesis. In terms of biological role, catalyzes the formation of pyridoxal 5'-phosphate from ribose 5-phosphate (RBP), glyceraldehyde 3-phosphate (G3P) and ammonia. The ammonia is provided by the PdxT subunit. Can also use ribulose 5-phosphate and dihydroxyacetone phosphate as substrates, resulting from enzyme-catalyzed isomerization of RBP and G3P, respectively. The sequence is that of Pyridoxal 5'-phosphate synthase subunit PdxS from Corynebacterium glutamicum (strain ATCC 13032 / DSM 20300 / JCM 1318 / BCRC 11384 / CCUG 27702 / LMG 3730 / NBRC 12168 / NCIMB 10025 / NRRL B-2784 / 534).